The chain runs to 528 residues: Bifunctional purine biosynthesis protein PurH (528 aa).

The region spanning 1–146 is the MGS-like domain; the sequence is MAPTALLSVS…KNHDHVAVLT (146 aa).

Belongs to the PurH family.

It carries out the reaction (6R)-10-formyltetrahydrofolate + 5-amino-1-(5-phospho-beta-D-ribosyl)imidazole-4-carboxamide = 5-formamido-1-(5-phospho-D-ribosyl)imidazole-4-carboxamide + (6S)-5,6,7,8-tetrahydrofolate. The enzyme catalyses IMP + H2O = 5-formamido-1-(5-phospho-D-ribosyl)imidazole-4-carboxamide. The protein operates within purine metabolism; IMP biosynthesis via de novo pathway; 5-formamido-1-(5-phospho-D-ribosyl)imidazole-4-carboxamide from 5-amino-1-(5-phospho-D-ribosyl)imidazole-4-carboxamide (10-formyl THF route): step 1/1. It functions in the pathway purine metabolism; IMP biosynthesis via de novo pathway; IMP from 5-formamido-1-(5-phospho-D-ribosyl)imidazole-4-carboxamide: step 1/1. This Synechococcus sp. (strain WH7803) protein is Bifunctional purine biosynthesis protein PurH.